Consider the following 386-residue polypeptide: Acyl-[acyl-carrier-protein] dehydrogenase MbtN (386 aa).

It belongs to the acyl-CoA dehydrogenase family. The cofactor is FAD.

Its pathway is siderophore biosynthesis; mycobactin biosynthesis. Functionally, catalyzes the dehydrogenation at the alpha-beta position of ACP-bound acyl chains. This results in the introduction of a double bond in the lipidic chain, which is further transferred to the epsilon-amino group of lysine residue in the mycobactin core by MbtK. This is Acyl-[acyl-carrier-protein] dehydrogenase MbtN (mbtN) from Mycobacterium bovis (strain ATCC BAA-935 / AF2122/97).